The sequence spans 262 residues: Catechol O-methyltransferase domain-containing protein 1 (262 aa).

A helical; Signal-anchor for type II membrane protein membrane pass occupies residues 12–32; it reads AALALGSAALGAAFATGLFLG. S-adenosyl-L-methionine contacts are provided by residues D108, 110–111, S116, E134, V135, A163, D185, D187, and Y194; that span reads GT.

Belongs to the class I-like SAM-binding methyltransferase superfamily. Cation-dependent O-methyltransferase family. As to quaternary structure, homodimer.

It is found in the membrane. Functionally, putative O-methyltransferase. In Homo sapiens (Human), this protein is Catechol O-methyltransferase domain-containing protein 1 (COMTD1).